A 387-amino-acid polypeptide reads, in one-letter code: 3-ketoacyl-CoA thiolase (387 aa).

Cys91 functions as the Acyl-thioester intermediate in the catalytic mechanism. Residues His343 and Cys373 each act as proton acceptor in the active site.

Belongs to the thiolase-like superfamily. Thiolase family. As to quaternary structure, heterotetramer of two alpha chains (FadB) and two beta chains (FadA).

The protein resides in the cytoplasm. The catalysed reaction is an acyl-CoA + acetyl-CoA = a 3-oxoacyl-CoA + CoA. It functions in the pathway lipid metabolism; fatty acid beta-oxidation. Its function is as follows. Catalyzes the final step of fatty acid oxidation in which acetyl-CoA is released and the CoA ester of a fatty acid two carbons shorter is formed. The protein is 3-ketoacyl-CoA thiolase of Shewanella denitrificans (strain OS217 / ATCC BAA-1090 / DSM 15013).